The chain runs to 501 residues: Dynein regulatory complex subunit 5 (501 aa).

The segment covering 1 to 23 (MQDTVTTSALLDPSHSSVSTQDN) has biased composition (polar residues). Disordered regions lie at residues 1–56 (MQDT…HPRA) and 202–222 (LPAQLRPGDQSDSGSEGEMEE). The span at 24–34 (SSTGGHTSSTS) shows a compositional bias: low complexity. LRR repeat units follow at residues 308-321 (VLEELDLSQNLIGD), 335-355 (RLRVLNLANNQVRAPGAQSLA), 363-383 (NLISLNLRLNCIEDEGGQALA), 391-411 (CLTTLHLGGNELSEPTATLLS), and 419-439 (TLTSINLSCNHIGLDGGKQLL).

It belongs to the DRC5 family. In terms of assembly, component of the nexin-dynein regulatory complex (N-DRC). Interacts with DRC1. Interacts with FBXL13/DRC6, DRC3 and DRC7.

It localises to the cell projection. Its subcellular location is the cilium. The protein resides in the flagellum. The protein localises to the cytoplasm. It is found in the cytoskeleton. It localises to the flagellum axoneme. Functionally, component of the nexin-dynein regulatory complex (N-DRC) a key regulator of ciliary/flagellar motility which maintains the alignment and integrity of the distal axoneme and regulates microtubule sliding in motile axonemes. May play a role in the assembly of N-DRC. May be required for sperm motility. This Homo sapiens (Human) protein is Dynein regulatory complex subunit 5 (TCTE1).